A 432-amino-acid polypeptide reads, in one-letter code: ATP-dependent RNA helicase SUB2 (432 aa).

Residues 1-17 (MSAEGQEELLDYSDSEE) show a composition bias toward acidic residues. Residues 1 to 35 (MSAEGQEELLDYSDSEEIAVPSNAPEAGADGADKD) form a disordered region. The short motif at 48–76 (TGFRDFLLKPELLRAIGDCGFEHPSEVQQ) is the Q motif element. Residues 79–254 (IPQSILGTDV…KKFMQNPLEI (176 aa)) enclose the Helicase ATP-binding domain. 92–99 (AKSGLGKT) contacts ATP. The DEAD box signature appears at 201–204 (DECD). The 162-residue stretch at 266–427 (GLQQYYLKLD…EFPEEGVDSS (162 aa)) folds into the Helicase C-terminal domain.

This sequence belongs to the DEAD box helicase family. DECD subfamily.

It is found in the nucleus. The catalysed reaction is ATP + H2O = ADP + phosphate + H(+). ATP-binding RNA helicase involved in transcription elongation and required for the export of mRNA out of the nucleus. SUB2 also plays a role in pre-mRNA splicing and spliceosome assembly. May be involved in rDNA and telomeric silencing, and maintenance of genome integrity. The chain is ATP-dependent RNA helicase SUB2 (SUB2) from Meyerozyma guilliermondii (strain ATCC 6260 / CBS 566 / DSM 6381 / JCM 1539 / NBRC 10279 / NRRL Y-324) (Yeast).